A 122-amino-acid chain; its full sequence is Large ribosomal subunit protein uL14 (122 aa).

It belongs to the universal ribosomal protein uL14 family. As to quaternary structure, part of the 50S ribosomal subunit. Forms a cluster with proteins L3 and L19. In the 70S ribosome, L14 and L19 interact and together make contacts with the 16S rRNA in bridges B5 and B8.

Its function is as follows. Binds to 23S rRNA. Forms part of two intersubunit bridges in the 70S ribosome. The chain is Large ribosomal subunit protein uL14 from Geobacter sulfurreducens (strain ATCC 51573 / DSM 12127 / PCA).